The primary structure comprises 449 residues: Phosphoglucosamine mutase (449 aa).

Serine 100 serves as the catalytic Phosphoserine intermediate. Residues serine 100, aspartate 241, aspartate 243, and aspartate 245 each coordinate Mg(2+). Serine 100 is modified (phosphoserine).

This sequence belongs to the phosphohexose mutase family. It depends on Mg(2+) as a cofactor. Activated by phosphorylation.

It catalyses the reaction alpha-D-glucosamine 1-phosphate = D-glucosamine 6-phosphate. Catalyzes the conversion of glucosamine-6-phosphate to glucosamine-1-phosphate. The sequence is that of Phosphoglucosamine mutase from Geobacillus kaustophilus (strain HTA426).